The chain runs to 126 residues: Aspartate 1-decarboxylase (126 aa).

Catalysis depends on Ser-25, which acts as the Schiff-base intermediate with substrate; via pyruvic acid. Ser-25 is modified (pyruvic acid (Ser)). Residue Thr-57 participates in substrate binding. Residue Tyr-58 is the Proton donor of the active site. Residue 73–75 (GGA) participates in substrate binding.

This sequence belongs to the PanD family. Heterooctamer of four alpha and four beta subunits. Pyruvate serves as cofactor. Post-translationally, is synthesized initially as an inactive proenzyme, which is activated by self-cleavage at a specific serine bond to produce a beta-subunit with a hydroxyl group at its C-terminus and an alpha-subunit with a pyruvoyl group at its N-terminus.

The protein resides in the cytoplasm. The catalysed reaction is L-aspartate + H(+) = beta-alanine + CO2. It functions in the pathway cofactor biosynthesis; (R)-pantothenate biosynthesis; beta-alanine from L-aspartate: step 1/1. Functionally, catalyzes the pyruvoyl-dependent decarboxylation of aspartate to produce beta-alanine. In Xylella fastidiosa (strain Temecula1 / ATCC 700964), this protein is Aspartate 1-decarboxylase.